The chain runs to 178 residues: Oligoribonuclease (178 aa).

The Exonuclease domain maps to 7 to 168 (LIWIDLEMTG…DDIRESIAEL (162 aa)). Residue Tyr128 is part of the active site.

This sequence belongs to the oligoribonuclease family.

Its subcellular location is the cytoplasm. Functionally, 3'-to-5' exoribonuclease specific for small oligoribonucleotides. The polypeptide is Oligoribonuclease (Pseudomonas syringae pv. tomato (strain ATCC BAA-871 / DC3000)).